Here is a 256-residue protein sequence, read N- to C-terminus: Ribosomal RNA large subunit methyltransferase E (256 aa).

S-adenosyl-L-methionine is bound by residues Gly50, Trp52, Asp69, Asp85, and Asp108. Lys148 acts as the Proton acceptor in catalysis. The TRAM domain maps to 195 to 253 (SLRKGDVVDVTIDAMGKTGDGIAHVDDFVVFVKGGSVGDKLKIKITDVKPSFAFADIVE).

The protein belongs to the class I-like SAM-binding methyltransferase superfamily. RNA methyltransferase RlmE family.

It localises to the cytoplasm. It catalyses the reaction uridine(2552) in 23S rRNA + S-adenosyl-L-methionine = 2'-O-methyluridine(2552) in 23S rRNA + S-adenosyl-L-homocysteine + H(+). In terms of biological role, specifically methylates the uridine in position 2552 of 23S rRNA at the 2'-O position of the ribose in the fully assembled 50S ribosomal subunit. In Methanocella arvoryzae (strain DSM 22066 / NBRC 105507 / MRE50), this protein is Ribosomal RNA large subunit methyltransferase E.